The following is a 304-amino-acid chain: Acetaldehyde dehydrogenase 4 (304 aa).

C131 functions as the Acyl-thioester intermediate in the catalytic mechanism. NAD(+) contacts are provided by residues 162–170 (SAGPGTRKN) and N273.

Belongs to the acetaldehyde dehydrogenase family. As to quaternary structure, heterotetramer composed of two BphI (aldolase) and two BphJ (dehydrogenase).

It catalyses the reaction acetaldehyde + NAD(+) + CoA = acetyl-CoA + NADH + H(+). It carries out the reaction propanal + NAD(+) + CoA = propanoyl-CoA + NADH + H(+). Its pathway is xenobiotic degradation; polychlorinated biphenyl degradation. With respect to regulation, bound pyruvate or other intermediates in the aldol addition reaction catalyzed by BphI allosterically activates BphJ reductive deacylation activity. Catalyzes the conversion of acetaldehyde or propanal to acetyl-CoA or propanoyl-CoA, respectively, using NAD(+) and coenzyme A. Displays broad specificity since it can utilize aliphatic aldehydes from two to five carbons in length as substrates; the aldehyde substrates can be directly channeled from the aldolase BphI to the dehydrogenase BphJ. Is the final enzyme in the meta-cleavage pathway for the degradation of polychlorinated biphenyls (PCBs). Is also able to utilize NADP(+) instead of NAD(+). Is not active with succinic semialdehyde or picolinaldehyde as substrates. Can also catalyze the reverse reaction, i.e. the reductive deacylation of acetyl-CoA to acetaldehyde, which is then channeled to the BphI active site. The BphI-BphJ enzyme complex exhibits unique bidirectionality in substrate channeling and allosteric activation. The polypeptide is Acetaldehyde dehydrogenase 4 (bphJ) (Paraburkholderia xenovorans (strain LB400)).